The following is a 283-amino-acid chain: ATP phosphoribosyltransferase (283 aa).

Belongs to the ATP phosphoribosyltransferase family. Long subfamily. The cofactor is Mg(2+).

The protein localises to the cytoplasm. The enzyme catalyses 1-(5-phospho-beta-D-ribosyl)-ATP + diphosphate = 5-phospho-alpha-D-ribose 1-diphosphate + ATP. The protein operates within amino-acid biosynthesis; L-histidine biosynthesis; L-histidine from 5-phospho-alpha-D-ribose 1-diphosphate: step 1/9. With respect to regulation, feedback inhibited by histidine. Its function is as follows. Catalyzes the condensation of ATP and 5-phosphoribose 1-diphosphate to form N'-(5'-phosphoribosyl)-ATP (PR-ATP). Has a crucial role in the pathway because the rate of histidine biosynthesis seems to be controlled primarily by regulation of HisG enzymatic activity. This is ATP phosphoribosyltransferase from Phocaeicola vulgatus (strain ATCC 8482 / DSM 1447 / JCM 5826 / CCUG 4940 / NBRC 14291 / NCTC 11154) (Bacteroides vulgatus).